The following is a 103-amino-acid chain: Small ribosomal subunit protein uS10 (103 aa).

The protein belongs to the universal ribosomal protein uS10 family. As to quaternary structure, part of the 30S ribosomal subunit.

Functionally, involved in the binding of tRNA to the ribosomes. The protein is Small ribosomal subunit protein uS10 of Buchnera aphidicola subsp. Cinara cedri (strain Cc).